Here is a 411-residue protein sequence, read N- to C-terminus: Intracellular hyaluronan-binding protein 4 (411 aa).

A phosphoserine mark is found at S7 and S36. The stretch at 42-62 forms a coiled coil; it reads LREAEHRRQQQLQRKRRDEAA. The disordered stretch occupies residues 42 to 271; it reads LREAEHRRQQ…ECQGTLDEES (230 aa). The residue at position 70 (R70) is an Omega-N-methylarginine. S74 is subject to Phosphoserine. Over residues 87 to 97 the composition is skewed to basic and acidic residues; it reads GRRESQKERKS. At S108 the chain carries Phosphoserine. Basic and acidic residues-rich tracts occupy residues 138–181 and 205–229; these read VLER…DRPL and DSFDQRGKRDFERYSSNDKTNRMED. Glycyl lysine isopeptide (Lys-Gly) (interchain with G-Cter in SUMO1); alternate cross-links involve residues K212 and K274. Glycyl lysine isopeptide (Lys-Gly) (interchain with G-Cter in SUMO2); alternate cross-links involve residues K212 and K274. The stretch at 279–301 forms a coiled coil; sequence EVEEENQVQEMTLDEWKNLQEQT. Residues 296 to 313 are compositionally biased toward basic and acidic residues; the sequence is NLQEQTRPKPEFNIRKPE. The tract at residues 296–318 is disordered; sequence NLQEQTRPKPEFNIRKPESTVPS. K334 participates in a covalent cross-link: Glycyl lysine isopeptide (Lys-Gly) (interchain with G-Cter in SUMO1); alternate. K334 participates in a covalent cross-link: Glycyl lysine isopeptide (Lys-Gly) (interchain with G-Cter in SUMO2); alternate. A phosphothreonine; by PKC mark is found at T352 and T373. The segment at 358 to 411 is disordered; that stretch reads NFGNLPRPGRGARGSTRGGRGRMRRTENYGPRAEVVTQDVAPNPDDPEDFPALA. A compositionally biased stretch (acidic residues) spans 402 to 411; sequence DDPEDFPALA.

This sequence belongs to the SERBP1-HABP4 family. As to quaternary structure, associates with ribosomes; promoting ribosome stabilization. Interacts with EEF2/eEF2; promoting ribosome stabilization. Interacts with FMR1. Interacts with FXR1 and FXR2. Interacts with CHD3 (via C-terminus). Interacts (via C-terminus) with RACK1. Interacts with p53/TP53. Interacts (via N-terminus) with SRSF9; this interaction is direct. Interacts with SYNCRIP; this interaction is direct. Interacts with MEF2C (via N-terminus); this interaction decreases DNA-binding activity of MEF2C in myocardial cells in response to mechanical stress. Interacts with PRMT1 (via N-terminus). Interacts with SPIN1. Phosphorylated by phorbol 12-myristate 13-acetate (PMA)-activated PKC isoforms at Thr-352 and Thr-373. Post-translationally, methylated. Methylation is decreased by phorbol 12-myristate 13-acetate (PMA)-activated PKC, in vitro. As to expression, expressed in adult heart, brain, liver, kidney, testis, and in various embryonic tissues, but not in adult spleen, lung or skeletal muscle.

Its subcellular location is the nucleus. The protein resides in the cytoplasm. It is found in the stress granule. It localises to the sarcoplasm. The protein localises to the nuclear body. Its subcellular location is the nucleolus. The protein resides in the nucleus speckle. It is found in the cajal body. It localises to the gem. Ribosome-binding protein that promotes ribosome hibernation, a process during which ribosomes are stabilized in an inactive state and preserved from proteasomal degradation. Acts via its association with EEF2/eEF2 factor at the A-site of the ribosome, promoting ribosome stabilization in an inactive state compatible with storage. Plays a key role in ribosome hibernation in the mature oocyte by promoting ribosome stabilization. Ribosomes, which are produced in large quantities during oogenesis, are stored and translationally repressed in the oocyte and early embryo. Also binds RNA, regulating transcription and pre-mRNA splicing. Binds (via C-terminus) to poly(U) RNA. Seems to play a role in PML-nuclear bodies formation. Negatively regulates DNA-binding activity of the transcription factor MEF2C in myocardial cells in response to mechanical stress. This is Intracellular hyaluronan-binding protein 4 from Mus musculus (Mouse).